Here is a 271-residue protein sequence, read N- to C-terminus: MFSIQQPLLVFSDLDGTLLDSHSYDWQPAAPWLSRLHEANIPVILCSSKTSAEMLYLQKMLGLQGLPLIAENGAVIQLAEQWQDIDGFPRIISGISHGEICQVLNKLREKEHFKFTTFDDVDDATIAEWTGLSRSQAALTQLHEASVTLIWRDSDEHMAQFIARLNELGLQFMQGARFWHVLDASAGKDQAANWIIATYQQLSGRRPTTLGLGDGPNDAPLLEVMDYAVIVKGLNREGVHLHDEDPARVWRTQREGPEGWREGLDHFFSAR.

Residue D13 is the Nucleophile of the active site. 3 residues coordinate Mg(2+): D13, D15, and D214.

It belongs to the HAD-like hydrolase superfamily. MPGP family. It depends on Mg(2+) as a cofactor.

The protein localises to the cytoplasm. It catalyses the reaction 2-O-(alpha-D-mannosyl)-3-phosphoglycerate + H2O = (2R)-2-O-(alpha-D-mannosyl)-glycerate + phosphate. This chain is Mannosyl-3-phosphoglycerate phosphatase (yedP), found in Escherichia coli O6:H1 (strain CFT073 / ATCC 700928 / UPEC).